A 72-amino-acid polypeptide reads, in one-letter code: Translation initiation factor IF-1 (72 aa).

The region spanning 1-72 (MAKEEMLEFP…TKGRINYRFK (72 aa)) is the S1-like domain.

Belongs to the IF-1 family. Component of the 30S ribosomal translation pre-initiation complex which assembles on the 30S ribosome in the order IF-2 and IF-3, IF-1 and N-formylmethionyl-tRNA(fMet); mRNA recruitment can occur at any time during PIC assembly.

It is found in the cytoplasm. Its function is as follows. One of the essential components for the initiation of protein synthesis. Stabilizes the binding of IF-2 and IF-3 on the 30S subunit to which N-formylmethionyl-tRNA(fMet) subsequently binds. Helps modulate mRNA selection, yielding the 30S pre-initiation complex (PIC). Upon addition of the 50S ribosomal subunit IF-1, IF-2 and IF-3 are released leaving the mature 70S translation initiation complex. This chain is Translation initiation factor IF-1, found in Jannaschia sp. (strain CCS1).